Consider the following 274-residue polypeptide: MGTLSVNQNKLQKRIRRLAGEAITDFNMIEDGDKVMVCLSGGKDSYTMLDVLLYLQKVAPIKFEIVAVNMDQKQPGFPEHVLPAYLESIGVAYHIIEKDTYSVVKEKIPEGKTTCSLCSRLRRGTLYTYADEIGATKMALGHHRDDILETFFLNMFYGGTLKAMPPKLLSDDGRNVVIRPLAYCAEADIEAYSQLKEFPIIPCNLCGSQENLQRQVVKEMLQEWERKSPGRVEIMFRALQNVHPSQLADRNLFDFKSLKIDDSATPRFLDVMSL.

The short motif at 40–45 (SGGKDS) is the PP-loop motif element. [4Fe-4S] cluster is bound by residues cysteine 115, cysteine 118, and cysteine 206.

This sequence belongs to the TtcA family. In terms of assembly, homodimer. Mg(2+) serves as cofactor. [4Fe-4S] cluster is required as a cofactor.

The protein localises to the cytoplasm. It catalyses the reaction cytidine(32) in tRNA + S-sulfanyl-L-cysteinyl-[cysteine desulfurase] + AH2 + ATP = 2-thiocytidine(32) in tRNA + L-cysteinyl-[cysteine desulfurase] + A + AMP + diphosphate + H(+). Its pathway is tRNA modification. In terms of biological role, catalyzes the ATP-dependent 2-thiolation of cytidine in position 32 of tRNA, to form 2-thiocytidine (s(2)C32). The sulfur atoms are provided by the cysteine/cysteine desulfurase (IscS) system. The chain is tRNA-cytidine(32) 2-sulfurtransferase from Ectopseudomonas mendocina (strain ymp) (Pseudomonas mendocina).